A 274-amino-acid polypeptide reads, in one-letter code: Ribosomal RNA small subunit methyltransferase A (274 aa).

6 residues coordinate S-adenosyl-L-methionine: Asn-28, Leu-30, Gly-55, Glu-77, Asp-103, and Asn-122.

It belongs to the class I-like SAM-binding methyltransferase superfamily. rRNA adenine N(6)-methyltransferase family. RsmA subfamily.

The protein localises to the cytoplasm. The catalysed reaction is adenosine(1518)/adenosine(1519) in 16S rRNA + 4 S-adenosyl-L-methionine = N(6)-dimethyladenosine(1518)/N(6)-dimethyladenosine(1519) in 16S rRNA + 4 S-adenosyl-L-homocysteine + 4 H(+). Its function is as follows. Specifically dimethylates two adjacent adenosines (A1518 and A1519) in the loop of a conserved hairpin near the 3'-end of 16S rRNA in the 30S particle. May play a critical role in biogenesis of 30S subunits. This is Ribosomal RNA small subunit methyltransferase A from Sinorhizobium medicae (strain WSM419) (Ensifer medicae).